A 416-amino-acid polypeptide reads, in one-letter code: Histone acetyltransferase type B catalytic subunit (416 aa).

Ala-2 carries the post-translational modification N-acetylalanine. Residues Lys-6 and Lys-12 each carry the N6-acetyllysine modification. Residues 59 to 61 are interaction with histone H4 N-terminus; sequence DDE. Ser-187 carries the post-translational modification Phosphoserine. The interval 222–224 is interaction with histone H4 N-terminus; that stretch reads YNY. Acetyl-CoA is bound by residues 238–240 and 245–251; these read MLI and QGQGHGA. Glu-273 (proton donor/acceptor) is an active-site residue. Residue Ser-340 is modified to Phosphoserine.

It belongs to the HAT1 family. In terms of assembly, catalytic subunit of the type B histone acetyltransferase (HAT) complex, composed of RBBP7 and HAT1. Interacts with histones H4 and H2A. The interaction is dependent of the ability of RBBP7 to bind to the N-terminus of histones. Component of the histone H3.1 and H3.3 complexes. Phosphorylated by AMPK at Ser-187; phosphorylation increases HAT1 activity.

The protein localises to the nucleus matrix. Its subcellular location is the mitochondrion. It catalyses the reaction L-lysyl-[protein] + acetyl-CoA = N(6)-acetyl-L-lysyl-[protein] + CoA + H(+). Functionally, histone acetyltransferase that plays a role in different biological processes including cell cycle progression, glucose metabolism, histone production or DNA damage repair. Coordinates histone production and acetylation via H4 promoter binding. Acetylates histone H4 at 'Lys-5' (H4K5ac) and 'Lys-12' (H4K12ac) and, to a lesser extent, histone H2A at 'Lys-5' (H2AK5ac). Drives H4 production by chromatin binding to support chromatin replication and acetylation. Since transcription of H4 genes is tightly coupled to S-phase, plays an important role in S-phase entry and progression. Promotes homologous recombination in DNA repair by facilitating histone turnover and incorporation of acetylated H3.3 at sites of double-strand breaks. In addition, acetylates other substrates such as chromatin-related proteins. Also acetylates RSAD2 which mediates the interaction of ubiquitin ligase UBE4A with RSAD2 leading to RSAD2 ubiquitination and subsequent degradation. This Mus musculus (Mouse) protein is Histone acetyltransferase type B catalytic subunit (Hat1).